We begin with the raw amino-acid sequence, 127 residues long: Small ribosomal subunit protein uS13 (127 aa).

Over residues 96–118 (LPVRGQRTHTNARTRKGPKRGIV) the composition is skewed to basic residues. A disordered region spans residues 96 to 127 (LPVRGQRTHTNARTRKGPKRGIVRAKPAAPAR).

The protein belongs to the universal ribosomal protein uS13 family. As to quaternary structure, part of the 30S ribosomal subunit. Forms a loose heterodimer with protein S19. Forms two bridges to the 50S subunit in the 70S ribosome.

In terms of biological role, located at the top of the head of the 30S subunit, it contacts several helices of the 16S rRNA. In the 70S ribosome it contacts the 23S rRNA (bridge B1a) and protein L5 of the 50S subunit (bridge B1b), connecting the 2 subunits; these bridges are implicated in subunit movement. Contacts the tRNAs in the A and P-sites. In Myxococcus xanthus (strain DK1622), this protein is Small ribosomal subunit protein uS13.